A 648-amino-acid polypeptide reads, in one-letter code: TBC1 domain family member 17 (648 aa).

The tract at residues 218-309 (DPYSTTFSSF…PELKNRIFSG (92 aa)) is required for interaction with OPTN. The disordered stretch occupies residues 240–259 (PQPEGAASDLPPPPDDEPEP). Residues 310 to 520 (GLSPSLRREA…RLWEVLWTGL (211 aa)) enclose the Rab-GAP TBC domain. The tract at residues 594–648 (LAPPAEPHSPSPTASPLPLSPTRAPPTPPPSTDTAPQPDSSLEILPEEEDEGADS) is disordered. The span at 597–624 (PAEPHSPSPTASPLPLSPTRAPPTPPPS) shows a compositional bias: pro residues. Phosphoserine is present on residues S602 and S604. At T606 the chain carries Phosphothreonine. S608 carries the post-translational modification Phosphoserine. T615 carries the post-translational modification Phosphothreonine. Residues 625–634 (TDTAPQPDSS) show a composition bias toward low complexity. Over residues 638-648 (LPEEEDEGADS) the composition is skewed to acidic residues.

As to quaternary structure, interacts with OPTN; this interaction mediates TBC1D17 transient association with Rab8.

Its subcellular location is the cytoplasmic vesicle. The protein localises to the autophagosome. The protein resides in the cytoplasm. It is found in the recycling endosome. Probable RAB GTPase-activating protein that inhibits RAB8A/B function. Reduces Rab8 recruitment to tubules emanating from the endocytic recycling compartment (ERC) and inhibits Rab8-mediated endocytic trafficking, such as that of transferrin receptor (TfR). Involved in regulation of autophagy. The protein is TBC1 domain family member 17 of Homo sapiens (Human).